The following is a 202-amino-acid chain: Large ribosomal subunit protein bL25 (202 aa).

Belongs to the bacterial ribosomal protein bL25 family. CTC subfamily. As to quaternary structure, part of the 50S ribosomal subunit; part of the 5S rRNA/L5/L18/L25 subcomplex. Contacts the 5S rRNA. Binds to the 5S rRNA independently of L5 and L18.

Its function is as follows. This is one of the proteins that binds to the 5S RNA in the ribosome where it forms part of the central protuberance. The chain is Large ribosomal subunit protein bL25 from Nitrosomonas eutropha (strain DSM 101675 / C91 / Nm57).